A 214-amino-acid chain; its full sequence is Thymidylate kinase (214 aa).

Position 12 to 19 (12 to 19) interacts with ATP; sequence GGEGAGKS.

This sequence belongs to the thymidylate kinase family.

It carries out the reaction dTMP + ATP = dTDP + ADP. Phosphorylation of dTMP to form dTDP in both de novo and salvage pathways of dTTP synthesis. This Gluconobacter oxydans (strain 621H) (Gluconobacter suboxydans) protein is Thymidylate kinase.